A 338-amino-acid polypeptide reads, in one-letter code: Hydroxyproline O-galactosyltransferase HPGT1 (338 aa).

Residues 1 to 12 lie on the Cytoplasmic side of the membrane; the sequence is MARKGSSIRLSS. Residues 13–32 traverse the membrane as a helical; Signal-anchor for type II membrane protein segment; the sequence is SRISTLLLFMFATFASFYVA. Topologically, residues 33-338 are lumenal; the sequence is GRLWQESQTR…WSSEAICAGV (306 aa).

This sequence belongs to the glycosyltransferase 31 family. The cofactor is Mn(2+). In terms of tissue distribution, expressed in roots, rosette leaves, cauline leaves, stems, flowers and siliques.

It is found in the golgi apparatus membrane. Its pathway is protein modification; protein glycosylation. In terms of biological role, possesses hydroxyproline O-galactosyltransferase activity. Transfers galactose from UDP-galactose to hydroxyproline residues in the arabinogalactan proteins (AGPs). Is specific for AGPs containing non-contiguous peptidyl hydroxyproline residues. The addition of galactose onto the peptidyl hydroxyproline residues in AGP core proteins represents the first committed step in arabinogalactan polysaccharide addition. AGP glycans play essential roles in both vegetative and reproductive plant growth. The polypeptide is Hydroxyproline O-galactosyltransferase HPGT1 (Arabidopsis thaliana (Mouse-ear cress)).